A 271-amino-acid polypeptide reads, in one-letter code: 4-hydroxy-tetrahydrodipicolinate reductase (271 aa).

NAD(+) contacts are provided by residues 11–16 (GAAGRM), E37, 102–104 (GTT), and 126–129 (AGNM). Catalysis depends on H159, which acts as the Proton donor/acceptor. H160 contacts (S)-2,3,4,5-tetrahydrodipicolinate. K163 serves as the catalytic Proton donor. Position 169–170 (169–170 (GT)) interacts with (S)-2,3,4,5-tetrahydrodipicolinate.

This sequence belongs to the DapB family.

The protein resides in the cytoplasm. It carries out the reaction (S)-2,3,4,5-tetrahydrodipicolinate + NAD(+) + H2O = (2S,4S)-4-hydroxy-2,3,4,5-tetrahydrodipicolinate + NADH + H(+). It catalyses the reaction (S)-2,3,4,5-tetrahydrodipicolinate + NADP(+) + H2O = (2S,4S)-4-hydroxy-2,3,4,5-tetrahydrodipicolinate + NADPH + H(+). The protein operates within amino-acid biosynthesis; L-lysine biosynthesis via DAP pathway; (S)-tetrahydrodipicolinate from L-aspartate: step 4/4. In terms of biological role, catalyzes the conversion of 4-hydroxy-tetrahydrodipicolinate (HTPA) to tetrahydrodipicolinate. This Parvibaculum lavamentivorans (strain DS-1 / DSM 13023 / NCIMB 13966) protein is 4-hydroxy-tetrahydrodipicolinate reductase.